A 531-amino-acid chain; its full sequence is Flavin-containing monooxygenase 3 (531 aa).

FAD-binding positions include 9–13 (GAGIS), Glu-32, 40–41 (LW), and 61–62 (NS). NADP(+) is bound by residues 60-61 (TN) and 195-198 (SGCD). A helical membrane pass occupies residues 511 to 531 (FSPWLKLLAIAVLLIAAVLVF).

This sequence belongs to the FMO family. It depends on FAD as a cofactor. In terms of tissue distribution, liver.

The protein localises to the microsome membrane. The protein resides in the endoplasmic reticulum membrane. It catalyses the reaction trimethylamine + NADPH + O2 = trimethylamine N-oxide + NADP(+) + H2O. The catalysed reaction is N,N-dimethylaniline + NADPH + O2 + H(+) = N,N-dimethylaniline N-oxide + NADP(+) + H2O. It carries out the reaction hypotaurine + NADPH + O2 + H(+) = taurine + NADP(+) + H2O. The enzyme catalyses (S)-nicotine + NADPH + O2 = trans-(S)-nicotine N(1')-oxide + NADP(+) + H2O. It catalyses the reaction albendazole + NADPH + O2 + H(+) = albendazole S-oxide + NADP(+) + H2O. Its function is as follows. Essential hepatic enzyme that catalyzes the oxygenation of a wide variety of nitrogen- and sulfur-containing compounds including drugs as well as dietary compounds. Plays an important role in the metabolism of trimethylamine (TMA), via the production of trimethylamine N-oxide (TMAO) metabolite. TMA is generated by the action of gut microbiota using dietary precursors such as choline, choline containing compounds, betaine or L-carnitine. By regulating TMAO concentration, FMO3 directly impacts both platelet responsiveness and rate of thrombus formation. The protein is Flavin-containing monooxygenase 3 (FMO3) of Oryctolagus cuniculus (Rabbit).